A 315-amino-acid chain; its full sequence is Ribosomal RNA small subunit methyltransferase H (315 aa).

Residues 33-35 (AGH), Asp-53, Phe-80, Asp-101, and Gln-108 each bind S-adenosyl-L-methionine.

This sequence belongs to the methyltransferase superfamily. RsmH family.

The protein resides in the cytoplasm. The catalysed reaction is cytidine(1402) in 16S rRNA + S-adenosyl-L-methionine = N(4)-methylcytidine(1402) in 16S rRNA + S-adenosyl-L-homocysteine + H(+). Functionally, specifically methylates the N4 position of cytidine in position 1402 (C1402) of 16S rRNA. The chain is Ribosomal RNA small subunit methyltransferase H from Natranaerobius thermophilus (strain ATCC BAA-1301 / DSM 18059 / JW/NM-WN-LF).